The sequence spans 1285 residues: Nuclear pore complex protein NUP133 (1285 aa).

Disordered stretches follow at residues 1-53 (MFSP…PAPW) and 522-580 (EPPE…QTAR). A compositionally biased stretch (polar residues) spans 31-41 (TPATQNRNNFI). Composition is skewed to basic and acidic residues over residues 523–544 (PPER…DETR) and 553–569 (TAGR…DKGN).

Belongs to the nucleoporin Nup133 family. In terms of assembly, part of the nuclear pore complex (NPC). The NPC has an eight-fold symmetrical structure comprising a central transport channel and two rings, the cytoplasmic and nuclear rings, to which eight filaments are attached. The cytoplasmic filaments have loose ends, while the nuclear filaments are joined in a distal ring, forming a nuclear basket. NPCs are highly dynamic in configuration and composition, and can be devided in 3 subcomplexes, the NUP62 subcomplex, the NUP107-160 subcomplex and the NUP93 subcomplex, containing approximately 30 different nucleoporin proteins.

The protein localises to the nucleus envelope. The protein resides in the nucleus. Its subcellular location is the nuclear pore complex. In Arabidopsis thaliana (Mouse-ear cress), this protein is Nuclear pore complex protein NUP133.